A 681-amino-acid polypeptide reads, in one-letter code: MASSFARDGSPSRGRSTSPRPRIPEESLEASLMDGLPDTRQLQAFGRKVTATAGSLIGTEGVGQHYQNALGELHRELRRPMLQRSVFSFAQTTPREIVRSRISVPEIQQRALAYVPDDMLANIPEDNNEFSLFQGFQATLPDEPETIKKKGKTHNARGQRLIGGELEDDEYSKLPPSMQRLQKQKHSMSHQLEMMGVRKHMCVAEIHEIDNKIANLNTMRKMVLDRLAGLEIQEEELAQDLLGVDNEIEDLQEELDDAAALAPPKEDSRPTTSGSEAVSETFMSESIYQKISPKSKNRGKKPIRRPSMRVLHEHLESGSKIKELPAHNDSITAMDFDAPWGTLVTASLDDTVRVWDLNAGRCIGMLEGHLSSVRCLQVEESIVATGSMDATIRLWDLSRAEYAPQDNRVNKRGGEGEGEGDGDAQEDEDGLAFENSSDAPPAPPPTIMQDVPLFTLESHVDEITAIHFKGDTLVSGSADKTLRQWDLVKGRCVQTLDVLWAAAQATATNNASSEWRPTGRSMDASADFVGAIQVFDAALACGTADGMVRLWDLRSGQVHRSLVGHTGPVTALQFDDVHLVTGSADRSIRIWDLRTGSIYDAYAYDNPVTSMMFDSRRIVSAAGESVVKVYDKTDGRHWNCGPGVGADEDDNTSHAMIERVRIKDGYLVEGRRDGTVGVWSC.

Disordered regions lie at residues 1-25, 146-171, and 259-279; these read MASSFARDGSPSRGRSTSPRPRIPE, TIKKKGKTHNARGQRLIGGELEDDEY, and AALAPPKEDSRPTTSGSEAVS. Low complexity predominate over residues 11 to 20; it reads PSRGRSTSPR. A coiled-coil region spans residues 211–263; sequence NKIANLNTMRKMVLDRLAGLEIQEEELAQDLLGVDNEIEDLQEELDDAAALAP. The segment covering 270–279 has biased composition (polar residues); that stretch reads PTTSGSEAVS. WD repeat units follow at residues 326 to 367 and 369 to 405; these read AHND…GMLE and HLSSVRCLQVEESIVATGSMDATIRLWDLSRAEYAPQ. Positions 406 to 449 are disordered; that stretch reads DNRVNKRGGEGEGEGDGDAQEDEDGLAFENSSDAPPAPPPTIMQ. Over residues 416–431 the composition is skewed to acidic residues; the sequence is GEGEGDGDAQEDEDGL. 5 WD repeats span residues 458-497, 505-561, 564-603, 605-640, and 647-681; these read SHVDEITAIHFKGDTLVSGSADKTLRQWDLVKGRCVQTLD, ATAT…VHRS, GHTGPVTALQFDDVHLVTGSADRSIRIWDLRTGSIYDAYA, DNPVTSMMFDSRRIVSAAGESVVKVYDKTDGRHWNC, and DEDDNTSHAMIERVRIKDGYLVEGRRDGTVGVWSC.

Belongs to the WD repeat MDV1/CAF4 family.

The protein resides in the mitochondrion outer membrane. Functionally, involved in mitochondrial fission. Acts as an adapter protein required to form mitochondrial fission complexes. Formation of these complexes is required to promote constriction and fission of the mitochondrial compartment at a late step in mitochondrial division. The sequence is that of Mitochondrial division protein 1 (MDV1) from Phaeosphaeria nodorum (strain SN15 / ATCC MYA-4574 / FGSC 10173) (Glume blotch fungus).